The following is a 666-amino-acid chain: Calcium/calmodulin-dependent protein kinase type II subunit beta (666 aa).

Positions 14–272 (YQLYEDIGKG…AHEALKHPWV (259 aa)) constitute a Protein kinase domain. Position 17 is a phosphotyrosine (Tyr17). ATP is bound by residues 20-28 (IGKGAFSVV) and Lys43. Asp136 functions as the Proton acceptor in the catalytic mechanism. Positions 283 to 292 (HRQETVECLK) are autoinhibitory domain. Phosphothreonine; by autocatalysis is present on Thr287. The tract at residues 291-301 (LKKFNARRKLK) is calmodulin-binding. Residues Thr306 and Thr307 each carry the phosphothreonine; by autocatalysis modification. A disordered region spans residues 349–534 (ADGVKPQTNS…IPGPLPTPSR (186 aa)). Positions 354–369 (PQTNSTKNSAAATSPK) are enriched in polar residues. A phosphoserine mark is found at Ser367, Ser394, and Ser397. Phosphothreonine is present on residues Thr400 and Thr401. Residues 432–447 (LPCPSPAPFSPLPAPS) show a composition bias toward pro residues. Low complexity predominate over residues 479–491 (SPALLGPLSSPSP). The segment covering 514-531 (PVGPPPCPSPTIPGPLPT) has biased composition (pro residues).

This sequence belongs to the protein kinase superfamily. CAMK Ser/Thr protein kinase family. CaMK subfamily. As to quaternary structure, CAMK2 is composed of 4 different chains: alpha (CAMK2A), beta (CAMK2B), gamma (CAMK2G), and delta (CAMK2D). The different isoforms assemble into homo- or heteromultimeric holoenzymes composed of 12 subunits with two hexameric rings stacked one on top of the other. Interacts with SYNGAP1 and CAMK2N2. Interacts with MPDZ. Interacts with FOXO3. Interacts (when in a kinase inactive state not associated with calmodulin) with ARC; leading to target ARC to inactive synapses. Interacts with CAMK2N1; this interaction requires CAMK2B activation by Ca(2+). In terms of processing, autophosphorylation of Thr-287 following activation by Ca(2+)/calmodulin. Phosphorylation of Thr-287 locks the kinase into an activated state. In terms of tissue distribution, widely expressed. Expressed in adult and fetal brain. Expression is slightly lower in fetal brain. Expressed in skeletal muscle.

The protein localises to the cytoplasm. Its subcellular location is the cytoskeleton. It localises to the microtubule organizing center. It is found in the centrosome. The protein resides in the sarcoplasmic reticulum membrane. The protein localises to the synapse. It catalyses the reaction L-seryl-[protein] + ATP = O-phospho-L-seryl-[protein] + ADP + H(+). The enzyme catalyses L-threonyl-[protein] + ATP = O-phospho-L-threonyl-[protein] + ADP + H(+). Activated by Ca(2+)/calmodulin. Binding of calmodulin results in conformational change that relieves intrasteric autoinhibition and allows autophosphorylation of Thr-287 which turns the kinase in a constitutively active form and confers to the kinase a Ca(2+)-independent activity. Functionally, calcium/calmodulin-dependent protein kinase that functions autonomously after Ca(2+)/calmodulin-binding and autophosphorylation, and is involved in dendritic spine and synapse formation, neuronal plasticity and regulation of sarcoplasmic reticulum Ca(2+) transport in skeletal muscle. In neurons, plays an essential structural role in the reorganization of the actin cytoskeleton during plasticity by binding and bundling actin filaments in a kinase-independent manner. This structural function is required for correct targeting of CaMK2A, which acts downstream of NMDAR to promote dendritic spine and synapse formation and maintain synaptic plasticity which enables long-term potentiation (LTP) and hippocampus-dependent learning. In developing hippocampal neurons, promotes arborization of the dendritic tree and in mature neurons, promotes dendritic remodeling. Also regulates the migration of developing neurons. Participates in the modulation of skeletal muscle function in response to exercise. In slow-twitch muscles, is involved in regulation of sarcoplasmic reticulum (SR) Ca(2+) transport and in fast-twitch muscle participates in the control of Ca(2+) release from the SR through phosphorylation of triadin, a ryanodine receptor-coupling factor, and phospholamban (PLN/PLB), an endogenous inhibitor of SERCA2A/ATP2A2. In response to interferon-gamma (IFN-gamma) stimulation, catalyzes phosphorylation of STAT1, stimulating the JAK-STAT signaling pathway. Phosphorylates reticulophagy regulator RETREG1 at 'Ser-151' under endoplasmic reticulum stress conditions which enhances RETREG1 oligomerization and its membrane scission and reticulophagy activity. The chain is Calcium/calmodulin-dependent protein kinase type II subunit beta (CAMK2B) from Homo sapiens (Human).